The primary structure comprises 242 residues: Venom nerve growth factor 1 (242 aa).

Residues 1 to 18 (MSMLCYTLIIAFLIGIWA) form the signal peptide. Residues 19 to 125 (APKSEDNVPL…ALNRNIRSKR (107 aa)) constitute a propeptide that is removed on maturation. A disordered region spans residues 26-69 (VPLGSPATSDLSDTSCAQTHKALKTSRNTDQRHPAPKKAEDQEL). The segment covering 31–43 (PATSDLSDTSCAQ) has biased composition (polar residues). A compositionally biased stretch (basic and acidic residues) spans 52-66 (RNTDQRHPAPKKAED). Intrachain disulfides connect cysteine 139-cysteine 203, cysteine 181-cysteine 231, and cysteine 191-cysteine 233. The N-linked (GlcNAc...) asparagine glycan is linked to asparagine 147.

This sequence belongs to the NGF-beta family. Homodimer; non-covalently linked. Expressed by the venom gland.

It is found in the secreted. Functionally, nerve growth factor is important for the development and maintenance of the sympathetic and sensory nervous systems. It stimulates division and differentiation of sympathetic and embryonic sensory neurons as well as basal forebrain cholinergic neurons in the brain. Its relevance in the snake venom is not clear. However, it has been shown to inhibit metalloproteinase-dependent proteolysis of platelet glycoprotein Ib alpha, suggesting a metalloproteinase inhibition to prevent metalloprotease autodigestion and/or protection against prey proteases. Binds a lipid between the two protein chains in the homodimer. The lipid-bound form promotes histamine relase from mouse mast cells, contrary to the lipid-free form. The sequence is that of Venom nerve growth factor 1 from Demansia vestigiata (Lesser black whip snake).